Reading from the N-terminus, the 238-residue chain is CD63 antigen (238 aa).

At Met-1–Lys-11 the chain is on the cytoplasmic side. A helical membrane pass occupies residues Phe-12–Gly-32. Residues Val-33 to Ser-51 are Extracellular-facing. The helical transmembrane segment at Leu-52 to Cys-72 threads the bilayer. Residues Cys-73 to Cys-81 are Cytoplasmic-facing. The helical transmembrane segment at Leu-82–Ile-102 threads the bilayer. Over Ala-103 to Ile-203 the chain is Extracellular. Residues Asn-116, Asn-130, Asn-150, and Asn-172 are each glycosylated (N-linked (GlcNAc...) asparagine). A helical membrane pass occupies residues Leu-204–Ser-224. Topologically, residues Cys-225–Met-238 are cytoplasmic. A Lysosomal targeting motif motif is present at residues Gly-234 to Met-238.

It belongs to the tetraspanin (TM4SF) family. As to quaternary structure, interacts with TIMP1 and ITGB1 and recruits TIMP1 to ITGB1. Interacts with CD9. Identified in a complex with CD9 and ITGB3. Interacts with PMEL. Interacts with KDR/VEGFR2; identified in a complex with ITGB1 and KDR/VEGFR2 and is required to recruit KDR to ITGB1 complexes. Interacts with SYT7. In terms of processing, palmitoylated at a low, basal level in unstimulated platelets. The level of palmitoylation increases when platelets are activated by thrombin (in vitro). As to expression, ubiquitous. Strongly expressed in kidney. Detected in spleen, bone marrow, peripheral blood mononuclear cells and macrophages.

It is found in the cell membrane. It localises to the lysosome membrane. The protein resides in the late endosome membrane. The protein localises to the endosome. Its subcellular location is the multivesicular body. It is found in the melanosome. It localises to the secreted. The protein resides in the extracellular exosome. The protein localises to the cell surface. In terms of biological role, functions as a cell surface receptor for TIMP1 and plays a role in the activation of cellular signaling cascades. Plays a role in the activation of ITGB1 and integrin signaling, leading to the activation of AKT, FAK/PTK2 and MAP kinases. Promotes cell survival, reorganization of the actin cytoskeleton, cell adhesion, spreading and migration, via its role in the activation of AKT and FAK/PTK2. Plays a role in VEGFA signaling via its role in regulating the internalization of KDR/VEGFR2. Plays a role in intracellular vesicular transport processes, and is required for normal trafficking of the PMEL luminal domain that is essential for the development and maturation of melanocytes. Plays a role in the adhesion of leukocytes onto endothelial cells via its role in the regulation of SELP trafficking. May play a role in mast cell degranulation in response to Ms4a2/FceRI stimulation, but not in mast cell degranulation in response to other stimuli. This chain is CD63 antigen (Cd63), found in Mus musculus (Mouse).